The primary structure comprises 273 residues: Testis-specific serine/threonine-protein kinase 6 (273 aa).

The 256-residue stretch at 12–267 (YKLGRTIGEG…AGQVARNGWL (256 aa)) folds into the Protein kinase domain. Residues 18–26 (IGEGSYSKV) and Lys41 each bind ATP. The active-site Proton acceptor is the Asp135.

Belongs to the protein kinase superfamily. CAMK Ser/Thr protein kinase family. As to quaternary structure, microtubule inner protein component of sperm flagellar doublet microtubules. Interacts with HSP90; this interaction stabilizes and activates TSSK6. Interacts with the heat shock proteins HSPCB, HSPA8 and HSPA1A. These interactions appear to be required for TSSK6 kinase activity. Interacts with TSACC; this interaction is direct and recruits TSACC to HSP90, which is essential for kinase activity. Requires Mg(2+) as cofactor. In terms of processing, autophosphorylated. Post-translationally, ubiquitinated; HSP90 activity negatively regulates ubiquitination and degradation. As to expression, expressed in the testis, localized to the heads of elongating spermatids.

It is found in the cytoplasm. The protein resides in the cytoskeleton. Its subcellular location is the flagellum axoneme. The protein localises to the nucleus. The catalysed reaction is L-seryl-[protein] + ATP = O-phospho-L-seryl-[protein] + ADP + H(+). It carries out the reaction L-threonyl-[protein] + ATP = O-phospho-L-threonyl-[protein] + ADP + H(+). Functionally, serine/threonine-protein kinase component of the sperm flagellar doublet microtubules. May act as a regulator of sperm motility by mediating phosphorylation of sperm doublet microtubule proteins. Plays a role in DNA condensation during postmeiotic chromatin remodeling and histone-to-protamine transition during spermatogenesis. This is Testis-specific serine/threonine-protein kinase 6 from Mus musculus (Mouse).